We begin with the raw amino-acid sequence, 792 residues long: MSAIKSIATVLAAILPSVLAQANTSYADYNTEANPDLTPQSVATIDLSFPDCDNGPLSKTIVCDTLTSPYDRAAALISLFTLEELVNATGNTSPGVPRLGLPPYQVWNEALHGLDRAYFTDEGQFSWSTSFPMPILTMSALNRTLINQVASIISTQGRAFSNAGRYGLDVYSPNINSFRHPVWGRGQETPGEDAYCLSSAYAYEYITGIQGGVDPKSLKLVATAKHYAGYDIENWDGHSRLGNDMNITQQDLSEYYTPQFLVAARDAKVRSVMCSYNAVNGVPSCANSFFLQTLLRDTFGFVEDGYISSDCDSAYNVFNPHEYAANVSSAAADSIRAGTDIDCGTTYQYYFDEAVDQNLLSRADIERGVIRLYSNLMRLGYFDGNSSAYRNLTWNDVVTTNSWNISYEVEGTVLLKNDGTLPLSESIRSIALVGPWMNVSTQLQGNYFGPAPYLISPLDAFRDSHLDVNYAFGTNISSNSTDGFSKALSAAKKSDAIIFAGGIDNSLEAETLDRMNITWPGKQLELIDQLSQLGKPLIVLQMGGGQVDSSLLKSNKNVNSLIWGGYPGQSGGQALLDIITGKRAPAGRLVVTQYPAEYATQFPATDMSLRPHGNNPGQTYMWYTGTPVYEFGHGLFYTTFRVSHARAVKIKPTYNIQDLLAQPHPGYIHVEQMPFLNFTVDITNTGKASSDYTAMLFANTTAGPAPYPKKWLVGFDRLPTLGPSTSKLMTIPVTINSMARTDELGNRVLYPGKYELALNNERSVVLPLSLTGKPAVLSKWPLEEQLIPLAKS.

The N-terminal stretch at methionine 1–alanine 20 is a signal peptide. Asparagine 23, asparagine 87, asparagine 142, and asparagine 246 each carry an N-linked (GlcNAc...) asparagine glycan. Aspartate 310 is an active-site residue. N-linked (GlcNAc...) asparagine glycosylation is found at asparagine 326, asparagine 385, asparagine 391, asparagine 404, asparagine 438, asparagine 475, asparagine 479, asparagine 516, asparagine 677, and asparagine 699.

This sequence belongs to the glycosyl hydrolase 3 family.

Its subcellular location is the secreted. It carries out the reaction Hydrolysis of (1-&gt;4)-beta-D-xylans, to remove successive D-xylose residues from the non-reducing termini.. It participates in glycan degradation; xylan degradation. Xylan 1,4-beta-xylosidase involved in the hydrolysis of xylan, a major structural heterogeneous polysaccharide found in plant biomass representing the second most abundant polysaccharide in the biosphere, after cellulose. The protein is Probable exo-1,4-beta-xylosidase xlnD (xlnD) of Aspergillus clavatus (strain ATCC 1007 / CBS 513.65 / DSM 816 / NCTC 3887 / NRRL 1 / QM 1276 / 107).